A 98-amino-acid chain; its full sequence is HssA/B-like protein 50 (98 aa).

Disordered regions lie at residues 1-26 (MTLFSSISSISNPMTSSKSSISSFGS) and 68-98 (TRGSCRGNGGSSNPVNGHGGMGGGNGSCCGI). Residues 84 to 98 (GHGGMGGGNGSCCGI) are compositionally biased toward gly residues.

The protein belongs to the hssA/B family.

In Dictyostelium discoideum (Social amoeba), this protein is HssA/B-like protein 50 (hssl50).